A 325-amino-acid polypeptide reads, in one-letter code: BES1/BZR1 homolog protein 4 (325 aa).

Residues 1–21 (MTSGTRMPTWRERENNKRRER) are disordered. The segment at 6 to 89 (RMPTWREREN…RMEIGGGSAT (84 aa)) is required for DNA-binding. Threonine 169 is subject to Phosphothreonine. The disordered stretch occupies residues 304–325 (ERIHEESGSDDLELTLGNSSTR).

The protein belongs to the BZR/LAT61 family. Phosphorylated. Phosphorylation increases protein degradation.

The polypeptide is BES1/BZR1 homolog protein 4 (BEH4) (Arabidopsis thaliana (Mouse-ear cress)).